A 244-amino-acid chain; its full sequence is Protein DCG1 (244 aa).

This sequence belongs to the HyuE racemase family.

This Saccharomyces cerevisiae (strain ATCC 204508 / S288c) (Baker's yeast) protein is Protein DCG1 (DCG1).